The sequence spans 225 residues: Ribosomal RNA large subunit methyltransferase E (225 aa).

S-adenosyl-L-methionine-binding residues include Gly79, Trp81, Asp97, Asp113, and Asp137. Lys177 serves as the catalytic Proton acceptor.

The protein belongs to the class I-like SAM-binding methyltransferase superfamily. RNA methyltransferase RlmE family.

Its subcellular location is the cytoplasm. It catalyses the reaction uridine(2552) in 23S rRNA + S-adenosyl-L-methionine = 2'-O-methyluridine(2552) in 23S rRNA + S-adenosyl-L-homocysteine + H(+). Its function is as follows. Specifically methylates the uridine in position 2552 of 23S rRNA at the 2'-O position of the ribose in the fully assembled 50S ribosomal subunit. This is Ribosomal RNA large subunit methyltransferase E from Acidiphilium cryptum (strain JF-5).